Here is a 429-residue protein sequence, read N- to C-terminus: Protein AST1 (429 aa).

In terms of assembly, interacts with PMA1.

The protein resides in the cell membrane. It localises to the membrane raft. The protein localises to the golgi apparatus membrane. Its subcellular location is the late endosome membrane. In terms of biological role, lipid raft-associated protein involved in the targeting of PMA1 from Golgi to the plasma membrane. May induce clustering of PMA1, which facilitates partition of PMA1 into lipid rafts after leaving the ER and its transport to the cell surface. This Saccharomyces cerevisiae (strain ATCC 204508 / S288c) (Baker's yeast) protein is Protein AST1.